A 197-amino-acid chain; its full sequence is Rac-like GTP-binding protein RHO1 (197 aa).

Position 13–20 (Gly-13–Thr-20) interacts with GTP. An Effector region motif is present at residues Tyr-35–Phe-43. GTP is bound by residues Asp-60 to Gln-64 and Thr-118 to Asp-121. Cys-194 carries the cysteine methyl ester modification. Cys-194 is lipidated: S-geranylgeranyl cysteine. Residues Ser-195–Leu-197 constitute a propeptide, removed in mature form.

Belongs to the small GTPase superfamily. Rho family. In terms of tissue distribution, expressed at the tip of pollen tubes.

It localises to the cytoplasm. The protein localises to the membrane. In terms of biological role, inactive GDP-bound Rho GTPases reside in the cytosol, are found in a complex with Rho GDP-dissociation inhibitors (Rho GDIs), and are released from the GDI protein in order to translocate to membranes upon activation. May be involved in cell polarity control during the actin-dependent tip growth of pollen tubes. This is Rac-like GTP-binding protein RHO1 (RHO1) from Pisum sativum (Garden pea).